A 466-amino-acid chain; its full sequence is 3-isopropylmalate dehydratase large subunit (466 aa).

[4Fe-4S] cluster contacts are provided by cysteine 347, cysteine 407, and cysteine 410.

This sequence belongs to the aconitase/IPM isomerase family. LeuC type 1 subfamily. As to quaternary structure, heterodimer of LeuC and LeuD. [4Fe-4S] cluster serves as cofactor.

The enzyme catalyses (2R,3S)-3-isopropylmalate = (2S)-2-isopropylmalate. It participates in amino-acid biosynthesis; L-leucine biosynthesis; L-leucine from 3-methyl-2-oxobutanoate: step 2/4. Catalyzes the isomerization between 2-isopropylmalate and 3-isopropylmalate, via the formation of 2-isopropylmaleate. The chain is 3-isopropylmalate dehydratase large subunit from Serratia proteamaculans (strain 568).